Consider the following 475-residue polypeptide: Bifunctional protein HldE (475 aa).

Positions 1–318 (MKITLPEFEK…ANALYTEQET (318 aa)) are ribokinase. 195–198 (NMSE) is an ATP binding site. Aspartate 264 is an active-site residue. The tract at residues 344-475 (MTNGCFDILH…DIIKTIRERG (132 aa)) is cytidylyltransferase.

It in the N-terminal section; belongs to the carbohydrate kinase PfkB family. This sequence in the C-terminal section; belongs to the cytidylyltransferase family. Homodimer.

It carries out the reaction D-glycero-beta-D-manno-heptose 7-phosphate + ATP = D-glycero-beta-D-manno-heptose 1,7-bisphosphate + ADP + H(+). It catalyses the reaction D-glycero-beta-D-manno-heptose 1-phosphate + ATP + H(+) = ADP-D-glycero-beta-D-manno-heptose + diphosphate. It functions in the pathway nucleotide-sugar biosynthesis; ADP-L-glycero-beta-D-manno-heptose biosynthesis; ADP-L-glycero-beta-D-manno-heptose from D-glycero-beta-D-manno-heptose 7-phosphate: step 1/4. It participates in nucleotide-sugar biosynthesis; ADP-L-glycero-beta-D-manno-heptose biosynthesis; ADP-L-glycero-beta-D-manno-heptose from D-glycero-beta-D-manno-heptose 7-phosphate: step 3/4. Catalyzes the phosphorylation of D-glycero-D-manno-heptose 7-phosphate at the C-1 position to selectively form D-glycero-beta-D-manno-heptose-1,7-bisphosphate. Its function is as follows. Catalyzes the ADP transfer from ATP to D-glycero-beta-D-manno-heptose 1-phosphate, yielding ADP-D-glycero-beta-D-manno-heptose. This is Bifunctional protein HldE from Aeromonas hydrophila subsp. hydrophila (strain ATCC 7966 / DSM 30187 / BCRC 13018 / CCUG 14551 / JCM 1027 / KCTC 2358 / NCIMB 9240 / NCTC 8049).